The chain runs to 134 residues: Small ribosomal subunit protein bS16 (134 aa).

The interval 79–134 (AGIAKRPSRNNPTKGEPGKKAQERLALAKQAEEEAAAKAAEAAAAAAAPAEEAASE) is disordered. Residues 115–134 (AKAAEAAAAAAAPAEEAASE) are compositionally biased toward low complexity.

It belongs to the bacterial ribosomal protein bS16 family.

This is Small ribosomal subunit protein bS16 from Brucella canis (strain ATCC 23365 / NCTC 10854 / RM-666).